Consider the following 170-residue polypeptide: 4-hydroxyphenylacetate 3-monooxygenase reductase component (170 aa).

It belongs to the non-flavoprotein flavin reductase family. HpaC subfamily. Monomer. HPA 3-hydroxylase consists of a reductase component HpaC and an oxygenase component HpaB. Some form of interactions between the reductase and the oxygenase facilitate the transfer of FADH(-) to the oxygenase in P.aeruginosa, although interactions are not required in other species.

The catalysed reaction is FADH2 + NAD(+) = FAD + NADH + 2 H(+). It functions in the pathway aromatic compound metabolism; 4-hydroxyphenylacetate degradation; pyruvate and succinate semialdehyde from 4-hydroxyphenylacetate: step 1/7. The rate of FAD reduction is independent of the presence of HPA, demonstrating that, in contrast to HPAH from A.baumannii, the activity of the HPAH reductase is not allosterically regulated by the substrate. Its function is as follows. Reductase component of the 4-hydroxyphenylacetate (HPA) 3-hydroxylase. Catalyzes the reduction of FAD by NADH. The reduced flavin is then transferred to the oxygenase component HpaB. Is also able to reduce FMN and riboflavin, but preferentially binds FAD. Has no activity with NADPH as the reductant. This is 4-hydroxyphenylacetate 3-monooxygenase reductase component from Pseudomonas aeruginosa (strain ATCC 15692 / DSM 22644 / CIP 104116 / JCM 14847 / LMG 12228 / 1C / PRS 101 / PAO1).